The sequence spans 404 residues: Multidrug resistance protein MdtG (404 aa).

A run of 11 helical transmembrane segments spans residues 19–39, 56–76, 90–110, 113–133, 144–164, 171–191, 222–242, 254–274, 288–308, 317–337, and 376–396; these read LGCF…PLYV, LVFS…GGLA, LGMA…QFLI, ALLG…ATQV, TLST…GLLA, PVFF…FFFI, LFVT…ILTL, IAFI…LSAP, ILIV…FVQT, FLLG…LVYN, and AVFC…WNSL.

Belongs to the major facilitator superfamily. DHA1 family. MdtG (TC 2.A.1.2.20) subfamily.

It is found in the cell inner membrane. The polypeptide is Multidrug resistance protein MdtG (Salmonella dublin (strain CT_02021853)).